A 305-amino-acid polypeptide reads, in one-letter code: RNA-binding protein with serine-rich domain 1 (305 aa).

A compositionally biased stretch (basic residues) spans 1-10 (MDLSGVKKKS). The segment at 1–161 (MDLSGVKKKS…KRRSPSPKPT (161 aa)) is necessary for interaction with SRP54, nuclear localization and exon-skipping. Residues 1–170 (MDLSGVKKKS…TKVHIGRLTR (170 aa)) are disordered. The segment at 1–220 (MDLSGVKKKS…ENPDEAEKAL (220 aa)) is necessary for interaction with the cleaved p110 isoform of CDC2L1. Glycyl lysine isopeptide (Lys-Gly) (interchain with G-Cter in SUMO2) cross-links involve residues Lys7 and Lys15. The span at 33–59 (DRSDEKSKDRSKDKGATKESSEKDRGR) shows a compositional bias: basic and acidic residues. Ser53 is subject to Phosphoserine; by CK2. Residues 68-126 (ASSGSSSTRSRSSSTSSSGSSTSTGSSSGSSSSSASSRSGSSSTSRSSSSSSSSGSPSP) show a composition bias toward low complexity. A necessary for interactions with UPF2 and UPF3B and UPF2-dependent NMD region spans residues 69–121 (SSGSSSTRSRSSSTSSSGSSTSTGSSSGSSSSSASSRSGSSSTSRSSSSSSSS). Composition is skewed to basic residues over residues 127–143 (SRRRHDNRRRSRSKSKP) and 151–167 (RKRRSPSPKPTKVHIGR). Phosphoserine occurs at positions 155 and 157. The necessary for interaction with PNN and exon-skipping stretch occupies residues 156–242 (PSPKPTKVHI…ITATAVLAPW (87 aa)). Residues 159–244 (KPTKVHIGRL…ATAVLAPWPR (86 aa)) are interaction with SAP18 and ACIN1. A Phosphothreonine modification is found at Thr161. Positions 161–240 (TKVHIGRLTR…QEITATAVLA (80 aa)) constitute an RRM domain. Lys218 is subject to N6-acetyllysine. Residues 238–305 (VLAPWPRPPP…RSRSSSNSSR (68 aa)) form a necessary for interaction with TRA2B, nuclear localization and exon-skipping region. Residues 240 to 305 (APWPRPPPRR…RSRSSSNSSR (66 aa)) are disordered. Over residues 242 to 262 (WPRPPPRRFSPPRRMLPPPPM) the composition is skewed to pro residues. Residues 266-298 (SPPRMRRRSRSPRRRSPVRRRSRSPGRRRHRSR) show a composition bias toward basic residues.

Belongs to the splicing factor SR family. Found in mRNA splicing-dependent exon junction complexes (EJC). Found in a post-splicing complex with NXF1, RBM8A, UPF1, UPF2, UPF3A, UPF3B and RNPS1. Component of the heterotrimeric ASAP (apoptosis- and splicing-associated protein) and PSAP complexes consisting of RNPS1, SAP18 and either ACIN1 or PNN, respectively; the ASAP and PSAP complexes probably are formed mutually exclusive. Component of the active spliceosome. Associates with polysomes. Interacts with the cleaved p110 isoform of CDC2L1, CSNK2A1, PNN, SART3, SRP54, SRRM1 and TRA2B/SFRS10. In terms of processing, phosphorylated on one or more of the four Ser/Thr residues (Ser-43, Thr-49, Ser-52 or Ser-53). Ser-53 phosphorylation site is important for splicing and translation stimulation activity in vitro. In terms of tissue distribution, ubiquitous.

The protein resides in the nucleus. Its subcellular location is the nucleus speckle. It is found in the cytoplasm. Its function is as follows. Part of pre- and post-splicing multiprotein mRNP complexes. Auxiliary component of the splicing-dependent multiprotein exon junction complex (EJC) deposited at splice junction on mRNAs. The EJC is a dynamic structure consisting of core proteins and several peripheral nuclear and cytoplasmic associated factors that join the complex only transiently either during EJC assembly or during subsequent mRNA metabolism. Component of the ASAP and PSAP complexes which bind RNA in a sequence-independent manner and are proposed to be recruited to the EJC prior to or during the splicing process and to regulate specific excision of introns in specific transcription subsets. The ASAP complex can inhibit RNA processing during in vitro splicing reactions. The ASAP complex promotes apoptosis and is disassembled after induction of apoptosis. Enhances the formation of the ATP-dependent A complex of the spliceosome. Involved in both constitutive splicing and, in association with SRP54 and TRA2B/SFRS10, in distinctive modulation of alternative splicing in a substrate-dependent manner. Involved in the splicing modulation of BCL2L1/Bcl-X (and probably other apoptotic genes); specifically inhibits formation of proapoptotic isoforms such as Bcl-X(S); the activity is different from the established EJC assembly and function. Participates in mRNA 3'-end cleavage. Involved in UPF2-dependent nonsense-mediated decay (NMD) of mRNAs containing premature stop codons. Also mediates increase of mRNA abundance and translational efficiency. Binds spliced mRNA 20-25 nt upstream of exon-exon junctions. This is RNA-binding protein with serine-rich domain 1 (RNPS1) from Homo sapiens (Human).